Consider the following 177-residue polypeptide: NADH-quinone oxidoreductase subunit B (177 aa).

Residues C36, C37, C101, and C130 each contribute to the [4Fe-4S] cluster site.

The protein belongs to the complex I 20 kDa subunit family. NDH-1 is composed of 14 different subunits. Subunits NuoB, C, D, E, F, and G constitute the peripheral sector of the complex. [4Fe-4S] cluster is required as a cofactor.

It localises to the cell inner membrane. It carries out the reaction a quinone + NADH + 5 H(+)(in) = a quinol + NAD(+) + 4 H(+)(out). NDH-1 shuttles electrons from NADH, via FMN and iron-sulfur (Fe-S) centers, to quinones in the respiratory chain. The immediate electron acceptor for the enzyme in this species is believed to be ubiquinone. Couples the redox reaction to proton translocation (for every two electrons transferred, four hydrogen ions are translocated across the cytoplasmic membrane), and thus conserves the redox energy in a proton gradient. This Hydrogenobaculum sp. (strain Y04AAS1) protein is NADH-quinone oxidoreductase subunit B.